We begin with the raw amino-acid sequence, 308 residues long: tRNA uridine(34) hydroxylase (308 aa).

Positions 128-222 constitute a Rhodanese domain; the sequence is ADENTVVVDT…YLEEVPREQS (95 aa). Catalysis depends on Cys-182, which acts as the Cysteine persulfide intermediate.

It belongs to the TrhO family.

The catalysed reaction is uridine(34) in tRNA + AH2 + O2 = 5-hydroxyuridine(34) in tRNA + A + H2O. In terms of biological role, catalyzes oxygen-dependent 5-hydroxyuridine (ho5U) modification at position 34 in tRNAs. In Brucella suis biovar 1 (strain 1330), this protein is tRNA uridine(34) hydroxylase.